The following is a 208-amino-acid chain: Small ribosomal subunit protein uS4 (208 aa).

An S4 RNA-binding domain is found at 98-163; that stretch reads QRLDNVVYRM…NPQITRAIEL (66 aa).

Belongs to the universal ribosomal protein uS4 family. In terms of assembly, part of the 30S ribosomal subunit. Contacts protein S5. The interaction surface between S4 and S5 is involved in control of translational fidelity.

One of the primary rRNA binding proteins, it binds directly to 16S rRNA where it nucleates assembly of the body of the 30S subunit. Its function is as follows. With S5 and S12 plays an important role in translational accuracy. The protein is Small ribosomal subunit protein uS4 of Campylobacter jejuni subsp. jejuni serotype O:6 (strain 81116 / NCTC 11828).